An 811-amino-acid chain; its full sequence is Glycerol-3-phosphate acyltransferase (811 aa).

Residues 303–308 (HRSHMD) carry the HXXXXD motif motif.

It belongs to the GPAT/DAPAT family.

The protein resides in the cell inner membrane. It carries out the reaction sn-glycerol 3-phosphate + an acyl-CoA = a 1-acyl-sn-glycero-3-phosphate + CoA. It functions in the pathway phospholipid metabolism; CDP-diacylglycerol biosynthesis; CDP-diacylglycerol from sn-glycerol 3-phosphate: step 1/3. This Haemophilus ducreyi (strain 35000HP / ATCC 700724) protein is Glycerol-3-phosphate acyltransferase.